A 59-amino-acid polypeptide reads, in one-letter code: Large ribosomal subunit protein bL32 (59 aa).

A disordered region spans residues 1–20 (MAVQKNKPTRSKRGMRRSHD). Over residues 7 to 19 (KPTRSKRGMRRSH) the composition is skewed to basic residues.

It belongs to the bacterial ribosomal protein bL32 family.

This chain is Large ribosomal subunit protein bL32, found in Wigglesworthia glossinidia brevipalpis.